The primary structure comprises 294 residues: uncharacterized protein (294 aa).

Residues 13-151 (QCSQIRPYLY…LIDLEQKLRG (139 aa)) enclose the Tyrosine-protein phosphatase domain. Residue cysteine 95 is the Phosphocysteine intermediate of the active site. A disordered region spans residues 234–294 (PTLLVPSSSS…WRLSFHKDVV (61 aa)).

The protein belongs to the protein-tyrosine phosphatase family. Non-receptor class dual specificity subfamily.

This is an uncharacterized protein from Caenorhabditis elegans.